A 429-amino-acid polypeptide reads, in one-letter code: Formate-dependent phosphoribosylglycinamide formyltransferase (429 aa).

N(1)-(5-phospho-beta-D-ribosyl)glycinamide contacts are provided by residues 26–27 (EL) and Glu-86. ATP-binding positions include Arg-118, Lys-159, 199-202 (EEHI), and Glu-207. An ATP-grasp domain is found at 123 to 319 (ETLVKEAKVP…EFGLHLRAVL (197 aa)). Mg(2+) is bound by residues Glu-276 and Glu-288. Residues Asp-295, Lys-375, and 382–383 (RR) contribute to the N(1)-(5-phospho-beta-D-ribosyl)glycinamide site.

Belongs to the PurK/PurT family. In terms of assembly, homodimer.

The catalysed reaction is N(1)-(5-phospho-beta-D-ribosyl)glycinamide + formate + ATP = N(2)-formyl-N(1)-(5-phospho-beta-D-ribosyl)glycinamide + ADP + phosphate + H(+). It participates in purine metabolism; IMP biosynthesis via de novo pathway; N(2)-formyl-N(1)-(5-phospho-D-ribosyl)glycinamide from N(1)-(5-phospho-D-ribosyl)glycinamide (formate route): step 1/1. In terms of biological role, involved in the de novo purine biosynthesis. Catalyzes the transfer of formate to 5-phospho-ribosyl-glycinamide (GAR), producing 5-phospho-ribosyl-N-formylglycinamide (FGAR). Formate is provided by PurU via hydrolysis of 10-formyl-tetrahydrofolate. In Pyrococcus furiosus (strain ATCC 43587 / DSM 3638 / JCM 8422 / Vc1), this protein is Formate-dependent phosphoribosylglycinamide formyltransferase.